Reading from the N-terminus, the 134-residue chain is Ethylmalonyl-CoA/methylmalonyl-CoA epimerase (134 aa).

A VOC domain is found at 4 to 134 (RLNHVAIAVP…NGCLVELEQV (131 aa)). Positions 7, 79, and 130 each coordinate Co(2+). Glutamate 130 acts as the Proton donor/acceptor in catalysis.

The protein belongs to the methylmalonyl-CoA epimerase family. The cofactor is Co(2+). Requires Mn(2+) as cofactor.

It carries out the reaction (2R)-ethylmalonyl-CoA = (2S)-ethylmalonyl-CoA. It catalyses the reaction (R)-methylmalonyl-CoA = (S)-methylmalonyl-CoA. Functionally, promiscuous isomerase that catalyzes epimerization of both ethylmalonyl-CoA and methylmalonyl-CoA. Has thus a dual role in the ethylmalonyl-CoA pathway for acetyl-CoA assimilation required for R.sphaeroides growth on acetate as sole carbon source. In Cereibacter sphaeroides (strain ATCC 17023 / DSM 158 / JCM 6121 / CCUG 31486 / LMG 2827 / NBRC 12203 / NCIMB 8253 / ATH 2.4.1.) (Rhodobacter sphaeroides), this protein is Ethylmalonyl-CoA/methylmalonyl-CoA epimerase.